We begin with the raw amino-acid sequence, 476 residues long: Zinc finger protein 563 (476 aa).

Positions 4–96 (VAFEDVAVNF…IRDSIVNNSI (93 aa)) constitute a KRAB domain. The C2H2-type 1; degenerate zinc finger occupies 101–125 (DPCQSAECEEVIMGHLSLNSHIRVD). A C2H2-type 2; degenerate zinc finger spans residues 169 to 191 (YECKECGKTFSSRRNLRRHMVVQ). C2H2-type zinc fingers lie at residues 197-219 (YKCKLCGKAFFWPSLLRMHERTH), 225-247 (YECKQCSKAFPFYSSYRRHERMH), 253-275 (YECKQCSKALPDSSSYIRHERTH), 281-303 (YTCKQCGKAFSVSSSLRRHETTH), 309-331 (YECKQCGKTFHHLGSFQIHMKRH), 337-359 (HKCKICGKGFDRPSLVRYHERIH), 365-387 (YECKQCGKTLSHSSSFRRHMIMH), 393-415 (HKCKICGKAFVYPSVCQRHEKSH), 421-443 (YECKQCGKALSHSSSFRRHMVMH), and 449-471 (NKCKVCGKAFVYPSVCQRHEKTH).

The protein belongs to the krueppel C2H2-type zinc-finger protein family.

The protein resides in the nucleus. May be involved in transcriptional regulation. The sequence is that of Zinc finger protein 563 (ZNF563) from Homo sapiens (Human).